Consider the following 505-residue polypeptide: Glycerol kinase 1 (505 aa).

Threonine 13 is a binding site for ADP. Residues threonine 13, threonine 14, and serine 15 each coordinate ATP. Threonine 13 lines the sn-glycerol 3-phosphate pocket. ADP is bound at residue arginine 17. Positions 83, 84, and 135 each coordinate sn-glycerol 3-phosphate. 3 residues coordinate glycerol: arginine 83, glutamate 84, and tyrosine 135. Histidine 231 is modified (phosphohistidine; by HPr). Aspartate 245 provides a ligand contact to sn-glycerol 3-phosphate. The glycerol site is built by aspartate 245 and glutamine 246. The ADP site is built by threonine 267 and glycine 310. 4 residues coordinate ATP: threonine 267, glycine 310, glutamine 314, and glycine 411. ADP-binding residues include glycine 411 and asparagine 415.

Belongs to the FGGY kinase family. In terms of assembly, homotetramer and homodimer (in equilibrium). Post-translationally, the phosphoenolpyruvate-dependent sugar phosphotransferase system (PTS), including enzyme I, and histidine-containing protein (HPr) are required for the phosphorylation, which leads to the activation of the enzyme.

The catalysed reaction is glycerol + ATP = sn-glycerol 3-phosphate + ADP + H(+). It functions in the pathway polyol metabolism; glycerol degradation via glycerol kinase pathway; sn-glycerol 3-phosphate from glycerol: step 1/1. Its activity is regulated as follows. Activated by phosphorylation and inhibited by fructose 1,6-bisphosphate (FBP). Its function is as follows. Key enzyme in the regulation of glycerol uptake and metabolism. Catalyzes the phosphorylation of glycerol to yield sn-glycerol 3-phosphate. This is Glycerol kinase 1 from Lactiplantibacillus plantarum (strain ATCC BAA-793 / NCIMB 8826 / WCFS1) (Lactobacillus plantarum).